We begin with the raw amino-acid sequence, 592 residues long: Beta-xylosidase (592 aa).

Positions 1–19 (MYLNACRALTLISVLSLLA) are cleaved as a signal peptide. Cys20 is lipidated: N-palmitoyl cysteine. A lipid anchor (S-diacylglycerol cysteine) is attached at Cys20.

This sequence belongs to the glycosyl hydrolase 43 family.

Its subcellular location is the cell outer membrane. In terms of biological role, xylosidase involved in ulvan degradation. Ulvan is the main polysaccharide component of the Ulvales (green seaweed) cell wall. It is composed of disaccharide building blocks comprising 3-sulfated rhamnose (Rha3S) linked to D-glucuronic acid (GlcA), L-iduronic acid (IduA), or D-xylose (Xyl). Beta-xylosidase converts Xyl-Rha3S, a product of alpha-L-rhamnosidase acting on Rha-Xyl-Rha3S oligosaccharides, further to Xyl and Rha3S. The polypeptide is Beta-xylosidase (Formosa agariphila (strain DSM 15362 / KCTC 12365 / LMG 23005 / KMM 3901 / M-2Alg 35-1)).